The primary structure comprises 410 residues: Scarecrow-like protein 32 (410 aa).

Positions 18-408 constitute a GRAS domain; sequence LRGCGDANFM…HSVVFATVWV (391 aa). A leucine repeat I (LRI) region spans residues 25-88; that stretch reads NFMEQLLLHC…AVSKTPTLSS (64 aa). The segment at 107 to 188 is VHIID; that stretch reads LAAFVDLTPW…HFPPFINISY (82 aa). The short motif at 138–142 is the VHIID element; the sequence is VHIVD. The segment at 190–227 is leucine repeat II (LRII); the sequence is ELGSKLVNFATTRNITMEFTIVPSTYSDGFSSLLQQLR. The interval 237-329 is PFYRE; it reads LVVNCHMMLR…EAEISWKIEN (93 aa). An SAW region spans residues 332-408; the sequence is AKEGAERVER…HSVVFATVWV (77 aa).

The protein belongs to the GRAS family. Expressed in seedlings, leaves and flowers.

It localises to the nucleus. Functionally, probable transcription factor involved in plant development. The polypeptide is Scarecrow-like protein 32 (SCL32) (Arabidopsis thaliana (Mouse-ear cress)).